The primary structure comprises 281 residues: Pantothenate synthetase (281 aa).

30-37 (MGALHRGH) serves as a coordination point for ATP. His-37 acts as the Proton donor in catalysis. Gln-61 is a binding site for (R)-pantoate. A beta-alanine-binding site is contributed by Gln-61. 147–150 (GEKD) is an ATP binding site. Gln-153 is a (R)-pantoate binding site. ATP-binding positions include Ile-176 and 184 to 187 (LSSR).

The protein belongs to the pantothenate synthetase family. As to quaternary structure, homodimer.

It localises to the cytoplasm. It carries out the reaction (R)-pantoate + beta-alanine + ATP = (R)-pantothenate + AMP + diphosphate + H(+). Its pathway is cofactor biosynthesis; (R)-pantothenate biosynthesis; (R)-pantothenate from (R)-pantoate and beta-alanine: step 1/1. Functionally, catalyzes the condensation of pantoate with beta-alanine in an ATP-dependent reaction via a pantoyl-adenylate intermediate. This Porphyromonas gingivalis (strain ATCC 33277 / DSM 20709 / CIP 103683 / JCM 12257 / NCTC 11834 / 2561) protein is Pantothenate synthetase.